We begin with the raw amino-acid sequence, 246 residues long: MPIQPSGKETEEMEAEGDSAAEMNGEADESEEERSGSQTESEEESSEMDDEDYERRRSECVSEMLDLEKQFSELKEKLFRERLSQLRLRLEEVGAERAPEYTEPLGGLQQSLKIRIQVAGIYKGFCLDVIRNKYECELQGAKQHLESEKMLLYDTLLGELQERIQRLEEDRQSLDISSEWWDDKLHSRSSSKAGDAMPPSKRKKAPLVSGPYIVYMLQEIDILEDWTAIKKARAAVSPQKRKADGP.

Residues 1-57 (MPIQPSGKETEEMEAEGDSAAEMNGEADESEEERSGSQTESEEESSEMDDEDYERRR) form a disordered region. Composition is skewed to acidic residues over residues 11–32 (EEMEAEGDSAAEMNGEADESEE) and 40–52 (ESEEESSEMDDED). The stretch at 51 to 98 (EDYERRRSECVSEMLDLEKQFSELKEKLFRERLSQLRLRLEEVGAERA) forms a coiled coil. Residues lysine 184 and lysine 242 each participate in a glycyl lysine isopeptide (Lys-Gly) (interchain with G-Cter in SUMO2) cross-link.

This sequence belongs to the BRMS1 family. In terms of assembly, homohexamer (Potential). Interacts with SNX6, HDAC1 and RELA. Interacts with ARID4A. Identified in mSin3A corepressor complexes together with SIN3A, SIN3B, RBBP4, RBBP7, SAP30, SUDS3, ARID4A, HDAC1 and HDAC2. Interacts with SPOP; this recruits the protein to a ubiquitin ligase complex containing SPOP and CUL3. In terms of processing, ubiquitinated by a cullin-RING-based BCR (BTB-CUL3-RBX1) E3 ubiquitin-protein ligase complex containing SPOP, leading to proteasomal degradation.

The protein resides in the nucleus. Its subcellular location is the cytoplasm. Transcriptional repressor. Down-regulates transcription activation by NF-kappa-B by promoting the deacetylation of RELA at 'Lys-310'. Promotes HDAC1 binding to promoter regions. Down-regulates expression of anti-apoptotic genes that are controlled by NF-kappa-B. Promotes apoptosis in cells that have inadequate adherence to a substrate, a process called anoikis, and may thereby inhibit metastasis. This Mus musculus (Mouse) protein is Breast cancer metastasis-suppressor 1 homolog (Brms1).